The sequence spans 342 residues: Cystein proteinase inhibitor protein salarin (342 aa).

The signal sequence occupies residues 1–19 (MKSLVLLLLVAVTVSSVVS). N-linked (GlcNAc) asparagine glycosylation is present at asparagine 153. Threonine 184 carries an O-linked (GlcNAc) threonine glycan.

In terms of processing, N-glycosylated, with sialylated biantennary complex-type glycans. Post-translationally, O-glycosylated, with sialylated oligosaccharides.

Its subcellular location is the cytoplasm. The protein localises to the vacuole. Inhibits papain and ficin (cysteine proteinases) but not trypsin (a serine proteinase). This is Cystein proteinase inhibitor protein salarin (salarin) from Salvelinus alpinus (Arctic char).